A 124-amino-acid polypeptide reads, in one-letter code: Small ribosomal subunit protein uS12 (124 aa).

Positions Met-1–Pro-28 are disordered. A 3-methylthioaspartic acid modification is found at Asp-89. Positions Thr-104 to Glu-124 are disordered.

It belongs to the universal ribosomal protein uS12 family. As to quaternary structure, part of the 30S ribosomal subunit. Contacts proteins S8 and S17. May interact with IF1 in the 30S initiation complex.

Functionally, with S4 and S5 plays an important role in translational accuracy. Interacts with and stabilizes bases of the 16S rRNA that are involved in tRNA selection in the A site and with the mRNA backbone. Located at the interface of the 30S and 50S subunits, it traverses the body of the 30S subunit contacting proteins on the other side and probably holding the rRNA structure together. The combined cluster of proteins S8, S12 and S17 appears to hold together the shoulder and platform of the 30S subunit. This is Small ribosomal subunit protein uS12 from Synechococcus sp. (strain WH7803).